We begin with the raw amino-acid sequence, 393 residues long: Chorismate synthase (393 aa).

Arg40 and Arg46 together coordinate NADP(+). Residues 129-131, 249-250, Gly301, 316-320, and Arg342 each bind FMN; these read RSS, QA, and KPIPT.

Belongs to the chorismate synthase family. As to quaternary structure, homotetramer. FMNH2 serves as cofactor.

It catalyses the reaction 5-O-(1-carboxyvinyl)-3-phosphoshikimate = chorismate + phosphate. It participates in metabolic intermediate biosynthesis; chorismate biosynthesis; chorismate from D-erythrose 4-phosphate and phosphoenolpyruvate: step 7/7. In terms of biological role, catalyzes the anti-1,4-elimination of the C-3 phosphate and the C-6 proR hydrogen from 5-enolpyruvylshikimate-3-phosphate (EPSP) to yield chorismate, which is the branch point compound that serves as the starting substrate for the three terminal pathways of aromatic amino acid biosynthesis. This reaction introduces a second double bond into the aromatic ring system. The protein is Chorismate synthase of Geobacter metallireducens (strain ATCC 53774 / DSM 7210 / GS-15).